Consider the following 366-residue polypeptide: 1-deoxy-D-xylulose 5-phosphate reductoisomerase (366 aa).

NADPH contacts are provided by Thr-7, Gly-8, Ser-9, Ile-10, Gly-31, Asn-33, and Asn-111. Residue Lys-112 participates in 1-deoxy-D-xylulose 5-phosphate binding. Glu-113 lines the NADPH pocket. Mn(2+) is bound at residue Asp-131. Ser-132, Glu-133, Ser-162, and His-185 together coordinate 1-deoxy-D-xylulose 5-phosphate. Glu-133 is a binding site for Mn(2+). An NADPH-binding site is contributed by Gly-191. Residues Ser-198, Asn-203, Lys-204, and Glu-207 each contribute to the 1-deoxy-D-xylulose 5-phosphate site. Glu-207 serves as a coordination point for Mn(2+).

The protein belongs to the DXR family. Requires Mg(2+) as cofactor. Mn(2+) serves as cofactor.

It carries out the reaction 2-C-methyl-D-erythritol 4-phosphate + NADP(+) = 1-deoxy-D-xylulose 5-phosphate + NADPH + H(+). The protein operates within isoprenoid biosynthesis; isopentenyl diphosphate biosynthesis via DXP pathway; isopentenyl diphosphate from 1-deoxy-D-xylulose 5-phosphate: step 1/6. Its function is as follows. Catalyzes the NADPH-dependent rearrangement and reduction of 1-deoxy-D-xylulose-5-phosphate (DXP) to 2-C-methyl-D-erythritol 4-phosphate (MEP). This Nautilia profundicola (strain ATCC BAA-1463 / DSM 18972 / AmH) protein is 1-deoxy-D-xylulose 5-phosphate reductoisomerase.